The chain runs to 708 residues: Vertnin (708 aa).

2 disordered regions span residues 473-499 (PWKGEGGEGAGKATAGGPPAPHEFLPP) and 561-636 (APAL…PVAE). The span at 568–582 (GLREAKEKQEKEAGR) shows a compositional bias: basic and acidic residues.

It belongs to the vertnin family.

This Ailuropoda melanoleuca (Giant panda) protein is Vertnin (VRTN).